A 358-amino-acid chain; its full sequence is Chorismate synthase (358 aa).

Positions 39–61 (ADIQPFLDKRRPGQSRHTTQRQE) are disordered. 2 residues coordinate NADP(+): arginine 48 and arginine 54. FMN is bound by residues 125-127 (RSS), 237-238 (NA), glycine 284, 299-303 (KPTSS), and arginine 325.

The protein belongs to the chorismate synthase family. As to quaternary structure, homotetramer. It depends on FMNH2 as a cofactor.

It catalyses the reaction 5-O-(1-carboxyvinyl)-3-phosphoshikimate = chorismate + phosphate. Its pathway is metabolic intermediate biosynthesis; chorismate biosynthesis; chorismate from D-erythrose 4-phosphate and phosphoenolpyruvate: step 7/7. Its function is as follows. Catalyzes the anti-1,4-elimination of the C-3 phosphate and the C-6 proR hydrogen from 5-enolpyruvylshikimate-3-phosphate (EPSP) to yield chorismate, which is the branch point compound that serves as the starting substrate for the three terminal pathways of aromatic amino acid biosynthesis. This reaction introduces a second double bond into the aromatic ring system. The protein is Chorismate synthase of Sphingopyxis alaskensis (strain DSM 13593 / LMG 18877 / RB2256) (Sphingomonas alaskensis).